We begin with the raw amino-acid sequence, 77 residues long: Ubiquitin-like protein NEDD8 (77 aa).

An interaction with uba-3 region spans residues 70–72; it reads VLA. A Glycyl lysine isopeptide (Gly-Lys) (interchain with K-? in acceptor proteins) cross-link involves residue Gly76. A propeptide is located at residue Phe77.

This sequence belongs to the ubiquitin family. In terms of assembly, interacts with dcn-1. Covalently attached to cullins. May interact with atx-3. Cleavage of precursor form is necessary for function.

Its subcellular location is the nucleus. The protein resides in the cytoplasm. In terms of biological role, ubiquitin-like protein which plays an important role in cell cycle control and embryogenesis. Covalent attachment to its substrates requires prior activation by the E1 complex uba-3-ula-1 and linkage to the E2 enzyme ubc-12. Attachment of ned-8 to cullins activates their associated E3 ubiquitin ligase activity, and thus promotes polyubiquitination and proteasomal degradation of cyclins and other regulatory proteins. The sequence is that of Ubiquitin-like protein NEDD8 (ned-8) from Caenorhabditis elegans.